A 626-amino-acid chain; its full sequence is DNA primase (626 aa).

The CHC2-type zinc finger occupies 39–63; sequence CPFHGEKTPSFSVSPEKQIFHCFGC. The Toprim domain maps to 264–346; it reads EEITLMEGFM…DVFVLQLPAG (83 aa). 3 residues coordinate Mg(2+): E270, D314, and D316.

The protein belongs to the DnaG primase family. Monomer. Interacts with DnaB. It depends on Zn(2+) as a cofactor. The cofactor is Mg(2+).

The enzyme catalyses ssDNA + n NTP = ssDNA/pppN(pN)n-1 hybrid + (n-1) diphosphate.. In terms of biological role, RNA polymerase that catalyzes the synthesis of short RNA molecules used as primers for DNA polymerase during DNA replication. This is DNA primase from Listeria innocua serovar 6a (strain ATCC BAA-680 / CLIP 11262).